Consider the following 101-residue polypeptide: Small ribosomal subunit protein bS6 (101 aa).

The protein belongs to the bacterial ribosomal protein bS6 family.

Functionally, binds together with bS18 to 16S ribosomal RNA. The sequence is that of Small ribosomal subunit protein bS6 from Paenarthrobacter aurescens (strain TC1).